The sequence spans 384 residues: S-adenosylmethionine synthase (384 aa).

Histidine 15 serves as a coordination point for ATP. Aspartate 17 serves as a coordination point for Mg(2+). Residue glutamate 43 participates in K(+) binding. Positions 56 and 99 each coordinate L-methionine. The interval 99-109 is flexible loop; that stretch reads QSPDINQGVDR. ATP-binding positions include 164–166, 230–231, aspartate 239, 245–246, alanine 262, and lysine 266; these read DAK, RF, and RK. Aspartate 239 lines the L-methionine pocket. Lysine 270 contacts L-methionine.

This sequence belongs to the AdoMet synthase family. Homotetramer; dimer of dimers. The cofactor is Mg(2+). Requires K(+) as cofactor.

It localises to the cytoplasm. It carries out the reaction L-methionine + ATP + H2O = S-adenosyl-L-methionine + phosphate + diphosphate. Its pathway is amino-acid biosynthesis; S-adenosyl-L-methionine biosynthesis; S-adenosyl-L-methionine from L-methionine: step 1/1. Functionally, catalyzes the formation of S-adenosylmethionine (AdoMet) from methionine and ATP. The overall synthetic reaction is composed of two sequential steps, AdoMet formation and the subsequent tripolyphosphate hydrolysis which occurs prior to release of AdoMet from the enzyme. The sequence is that of S-adenosylmethionine synthase from Serratia proteamaculans (strain 568).